The following is a 245-amino-acid chain: 3-deoxy-manno-octulosonate cytidylyltransferase (245 aa).

It belongs to the KdsB family.

The protein localises to the cytoplasm. The enzyme catalyses 3-deoxy-alpha-D-manno-oct-2-ulosonate + CTP = CMP-3-deoxy-beta-D-manno-octulosonate + diphosphate. It participates in nucleotide-sugar biosynthesis; CMP-3-deoxy-D-manno-octulosonate biosynthesis; CMP-3-deoxy-D-manno-octulosonate from 3-deoxy-D-manno-octulosonate and CTP: step 1/1. It functions in the pathway bacterial outer membrane biogenesis; lipopolysaccharide biosynthesis. Functionally, activates KDO (a required 8-carbon sugar) for incorporation into bacterial lipopolysaccharide in Gram-negative bacteria. The chain is 3-deoxy-manno-octulosonate cytidylyltransferase from Rhodopseudomonas palustris (strain BisB18).